Consider the following 629-residue polypeptide: tRNA uridine 5-carboxymethylaminomethyl modification enzyme MnmG (629 aa).

Residues 13–18 (GGGHAG), Val125, and Ser180 each bind FAD. An NAD(+)-binding site is contributed by 273–287 (GPRYCPSIEDKVMRF). Gln370 contributes to the FAD binding site.

The protein belongs to the MnmG family. In terms of assembly, homodimer. Heterotetramer of two MnmE and two MnmG subunits. It depends on FAD as a cofactor.

Its subcellular location is the cytoplasm. In terms of biological role, NAD-binding protein involved in the addition of a carboxymethylaminomethyl (cmnm) group at the wobble position (U34) of certain tRNAs, forming tRNA-cmnm(5)s(2)U34. The protein is tRNA uridine 5-carboxymethylaminomethyl modification enzyme MnmG of Sodalis glossinidius (strain morsitans).